A 380-amino-acid polypeptide reads, in one-letter code: Geranylgeranyl pyrophosphate synthase cle6 (380 aa).

Over residues 1-19 (MHSVRTSTTSTSSMVSSTM) the composition is skewed to low complexity. Residues 1-55 (MHSVRTSTTSTSSMVSSTMHPFDAFNAPQPYQQHHPPRWNIHNPHFSQTNGHSIQ) form a disordered region. Over residues 45 to 55 (HFSQTNGHSIQ) the composition is skewed to polar residues. Lys-102, Arg-105, and His-134 together coordinate isopentenyl diphosphate. Asp-141 and Asp-145 together coordinate Mg(2+). Dimethylallyl diphosphate is bound at residue Arg-150. Residue Arg-151 participates in isopentenyl diphosphate binding. Dimethylallyl diphosphate is bound by residues Lys-229, Thr-230, and Gln-263. Asp-266 lines the Mg(2+) pocket. Positions 270, 280, and 290 each coordinate dimethylallyl diphosphate.

The protein belongs to the FPP/GGPP synthase family. The cofactor is Mg(2+).

The catalysed reaction is isopentenyl diphosphate + dimethylallyl diphosphate = (2E)-geranyl diphosphate + diphosphate. The enzyme catalyses isopentenyl diphosphate + (2E)-geranyl diphosphate = (2E,6E)-farnesyl diphosphate + diphosphate. It carries out the reaction isopentenyl diphosphate + (2E,6E)-farnesyl diphosphate = (2E,6E,10E)-geranylgeranyl diphosphate + diphosphate. It functions in the pathway secondary metabolite biosynthesis; terpenoid biosynthesis. Geranylgeranyl pyrophosphate synthase; part of the cluster A that mediates the biosynthesis of chevalone E and its oxidized derivatives that possess a unique five-membered lactone ring and can synergistically enhance the cytotoxicity of doxorubicin (DOX) in breast cancer cells. Within the pathway, cle6 takes part to the biosynthesis of the molecular scaffold by providing geranylgeranyl pyrophosphate (GGPP) to the prenyltransferase cle5 for C-3 geranylgeranylation of triacetic acid lactone. The molecular scaffold is commonly biosynthesized by a series of enzymes including the non-reducing polyketide synthase (NR-PKS) cle1 that produces the alpha-pyrone triacetic acid lactone (TAL); The membrane-bound prenyltransferase cle5 that accepts TAL as its substrate to perform a C-3 geranylgeranylation reaction, in which the pathway-dedicated GGPS cle6 is required to provide GGPP, the other substrate of cle5; the FAD-dependent monooxygenase Cle3 that forms an (S)-epoxide ring at the terminal olefin of the geranylgeranyl group; and the terpene cyclase Cle7 that catalyzes the cyclization of the prenyl group that yields the pentacyclic pathway intermediate chevalone E. Chevalone E can derivatize into seven new oxidized analogs by the cytochrome P450 monooxygenases cle2 (acting at C-20) and cle4 (acting at C-11 and C-12). This chain is Geranylgeranyl pyrophosphate synthase cle6, found in Aspergillus versicolor.